We begin with the raw amino-acid sequence, 542 residues long: CTP synthase (542 aa).

The tract at residues 1–265 (MTRYIFVTGG…DQLVIERFGL (265 aa)) is amidoligase domain. Position 13 (serine 13) interacts with CTP. Serine 13 is a binding site for UTP. ATP is bound by residues 14–19 (SLGKGI) and aspartate 71. Positions 71 and 139 each coordinate Mg(2+). CTP contacts are provided by residues 146–148 (DIE), 186–191 (KTKPTQ), and lysine 222. UTP-binding positions include 186 to 191 (KTKPTQ) and lysine 222. The 252-residue stretch at 290–541 (TIAMVGKYME…VEAALANKKG (252 aa)) folds into the Glutamine amidotransferase type-1 domain. Position 351 (glycine 351) interacts with L-glutamine. The active-site Nucleophile; for glutamine hydrolysis is cysteine 378. Residues 379–382 (LGMQ), glutamate 402, and arginine 469 contribute to the L-glutamine site. Residues histidine 514 and glutamate 516 contribute to the active site.

Belongs to the CTP synthase family. As to quaternary structure, homotetramer.

The enzyme catalyses UTP + L-glutamine + ATP + H2O = CTP + L-glutamate + ADP + phosphate + 2 H(+). It carries out the reaction L-glutamine + H2O = L-glutamate + NH4(+). The catalysed reaction is UTP + NH4(+) + ATP = CTP + ADP + phosphate + 2 H(+). Its pathway is pyrimidine metabolism; CTP biosynthesis via de novo pathway; CTP from UDP: step 2/2. Allosterically activated by GTP, when glutamine is the substrate; GTP has no effect on the reaction when ammonia is the substrate. The allosteric effector GTP functions by stabilizing the protein conformation that binds the tetrahedral intermediate(s) formed during glutamine hydrolysis. Inhibited by the product CTP, via allosteric rather than competitive inhibition. Functionally, catalyzes the ATP-dependent amination of UTP to CTP with either L-glutamine or ammonia as the source of nitrogen. Regulates intracellular CTP levels through interactions with the four ribonucleotide triphosphates. The chain is CTP synthase from Marinobacter nauticus (strain ATCC 700491 / DSM 11845 / VT8) (Marinobacter aquaeolei).